The sequence spans 126 residues: Putative regulator AldR (126 aa).

Belongs to the RutC family.

Functionally, implicated in the regulation of isoleucine biosynthesis. The protein is Putative regulator AldR (aldR) of Lactococcus lactis subsp. lactis (strain IL1403) (Streptococcus lactis).